We begin with the raw amino-acid sequence, 537 residues long: Glucans biosynthesis protein D (537 aa).

The segment at residues 1 to 30 is a signal peptide (tat-type signal); sequence MLMYRRDFLKSVTAAWVAFGLPNPLGGAFA.

The protein belongs to the OpgD/OpgG family. In terms of processing, predicted to be exported by the Tat system. The position of the signal peptide cleavage has not been experimentally proven.

It is found in the periplasm. The protein operates within glycan metabolism; osmoregulated periplasmic glucan (OPG) biosynthesis. In terms of biological role, probably involved in the control of the structural glucose backbone of osmoregulated periplasmic glucans (OPGs). This chain is Glucans biosynthesis protein D, found in Xylella fastidiosa (strain M12).